The primary structure comprises 183 residues: Capsid protein (183 aa).

The tract at residues 136 to 183 is disordered; it reads NAPILSTLPETTVVRQRGRAPRRRTPSPRRRRSQSPRRRRSQSPASQC. The segment covering 151–176 has biased composition (basic residues); that stretch reads QRGRAPRRRTPSPRRRRSQSPRRRRS. The 1; half-length repeat unit spans residues 155 to 161; that stretch reads APRRRTP. The tract at residues 155–177 is 3 X 8 AA repeats of S-P-R-R-R-[PR]-S-Q; it reads APRRRTPSPRRRRSQSPRRRRSQ. Residues 158 to 175 carry the Bipartite nuclear localization signal motif; sequence RRTPSPRRRRSQSPRRRR. Phosphoserine; by host occurs at positions 162 and 170. Repeat copies occupy residues 162–169 and 170–177. An RNA binding region spans residues 177–183; that stretch reads QSPASQC.

This sequence belongs to the orthohepadnavirus core antigen family. As to quaternary structure, homodimerizes, then multimerizes. Interacts with cytosol exposed regions of viral L glycoprotein present in the reticulum-to-Golgi compartment. Interacts with human FLNB. Phosphorylated form interacts with host importin alpha; this interaction depends on the exposure of the NLS, which itself depends upon genome maturation and/or phosphorylation of the capsid protein. Interacts with host NUP153. Phosphorylated by host SRPK1, SRPK2, and maybe protein kinase C or GAPDH. Phosphorylation is critical for pregenomic RNA packaging. Protein kinase C phosphorylation is stimulated by HBx protein and may play a role in transport of the viral genome to the nucleus at the late step during the viral replication cycle.

It localises to the virion. The protein localises to the host cytoplasm. In terms of biological role, self assembles to form an icosahedral capsid. Most capsids appear to be large particles with an icosahedral symmetry of T=4 and consist of 240 copies of capsid protein, though a fraction forms smaller T=3 particles consisting of 180 capsid proteins. Entering capsids are transported along microtubules to the nucleus. Phosphorylation of the capsid is thought to induce exposure of nuclear localization signal in the C-terminal portion of the capsid protein that allows binding to the nuclear pore complex via the importin (karyopherin-) alpha and beta. Capsids are imported in intact form through the nuclear pore into the nuclear basket, where it probably binds NUP153. Only capsids that contain the mature viral genome can release the viral DNA and capsid protein into the nucleoplasm. Immature capsids get stuck in the basket. Capsids encapsulate the pre-genomic RNA and the P protein. Pre-genomic RNA is reverse-transcribed into DNA while the capsid is still in the cytoplasm. The capsid can then either be directed to the nucleus, providing more genomes for transcription, or bud through the endoplasmic reticulum to provide new virions. The chain is Capsid protein from Homo sapiens (Human).